The chain runs to 1000 residues: DENN domain-containing protein 2A (1000 aa).

Disordered regions lie at residues 1–155 (MLEA…LRFQ), 174–328 (DGSA…RKSY), 427–464 (KLLDTRKLSRDGAGSPLRTSPPSTPSSPDDTFFNLGDL), and 491–525 (KRVKRLSQSTESNSGKVTDENSESDSDTEEKLKAH). Over residues 34 to 43 (QLNSVPNSGP) the composition is skewed to polar residues. Basic and acidic residues-rich tracts occupy residues 56–70 (IKDKISKWEGKKEPP), 79–117 (DGQEDHLPSCKVERRGSELTRTKNGMRLETERLQNDSRA), 140–155 (SQHRGRELKPSDLRFQ), and 221–237 (HLEVREPGPEISEDWKG). Pro residues-rich tracts occupy residues 249 to 258 (PPKPFINPVP) and 288 to 307 (PPLPSLPPPPPPLPSSPPPT). The segment covering 427–436 (KLLDTRKLSR) has biased composition (basic and acidic residues). Over residues 496–506 (LSQSTESNSGK) the composition is skewed to polar residues. Serine 544 is subject to Phosphoserine. The region spanning 559 to 708 (EYFVVVSLHK…PFPALGKTII (150 aa)) is the uDENN domain. The cDENN domain occupies 730–863 (RLEHVDFESL…LQVALEHILE (134 aa)). Residues 865-960 (RNDLACDQDG…QERELRRQDA (96 aa)) enclose the dDENN domain.

It is found in the cytoplasm. It localises to the cytoskeleton. Its function is as follows. Guanine nucleotide exchange factor (GEF) which may activate RAB9A and RAB9B. Promotes the exchange of GDP to GTP, converting inactive GDP-bound Rab proteins into their active GTP-bound form. May play a role in late endosomes back to trans-Golgi network/TGN transport. This Mus musculus (Mouse) protein is DENN domain-containing protein 2A (Dennd2a).